A 512-amino-acid polypeptide reads, in one-letter code: Krueppel-like factor 11 (512 aa).

The tract at residues 109-128 is disordered; the sequence is PQSPDLVEPSTRTPVSPQVT. A compositionally biased stretch (polar residues) spans 118–128; sequence STRTPVSPQVT. S124 carries the post-translational modification Phosphoserine. 3 consecutive C2H2-type zinc fingers follow at residues 394–418, 424–448, and 454–476; these read YVCS…LRTH, FNCS…RRTH, and FVCP…ARRH.

This sequence belongs to the Sp1 C2H2-type zinc-finger protein family. Interacts with SIN3A. Ubiquitous. Higher expression in erythroid cells.

Its subcellular location is the nucleus. Its function is as follows. Transcription factor. Activates the epsilon- and gamma-globin gene promoters and, to a much lower degree, the beta-globin gene and represses promoters containing SP1-like binding inhibiting cell growth. Represses transcription of SMAD7 which enhances TGF-beta signaling. Induces apoptosis. In Homo sapiens (Human), this protein is Krueppel-like factor 11 (KLF11).